The primary structure comprises 279 residues: Probable thymidylate synthase (279 aa).

Residues Arg-21 and 136–137 each bind dUMP; that span reads RR. Cys-156 acts as the Nucleophile in catalysis. DUMP contacts are provided by residues 177 to 180, Asn-188, and 218 to 220; these read RSVD and HIY. Asp-180 contributes to the (6R)-5,10-methylene-5,6,7,8-tetrahydrofolate binding site.

The protein belongs to the thymidylate synthase family.

It carries out the reaction dUMP + (6R)-5,10-methylene-5,6,7,8-tetrahydrofolate = 7,8-dihydrofolate + dTMP. Its function is as follows. Sythesizes the thymine necessary for the viral DNA replication. The sequence is that of Probable thymidylate synthase from Escherichia coli (Enterobacteria phage T5).